Here is a 267-residue protein sequence, read N- to C-terminus: MTKTKIMGILNVTPDSFSDGGKFNNVESAINRVKAMIDEGVDIIDVGGVSTRPGHEMVSLEEEMNRVLPVVEAIVGFDVKISVDTFRSEVAEACLKLGVDMINDQWAGLYDHRMFQIVAKYDAEIILMHNGNGNRDEPVVEEMLTSLLAQAHQAKIAGIPSNKIWLDPGIGFAKTRNEEAEVMARLDELVATEYPVLLATSRKRFTKEMMGYDTTPVERDEVTAATTAYGIMKGVRAVRVHNVELNAKLAKGIDFLKENENARHNLS.

In terms of domain architecture, Pterin-binding spans 1-251; it reads MTKTKIMGIL…NVELNAKLAK (251 aa). N11 lines the Mg(2+) pocket. (7,8-dihydropterin-6-yl)methyl diphosphate is bound by residues T51, D84, N103, D167, K203, and 239-241; that span reads RVH.

Belongs to the DHPS family. Homodimer. Mg(2+) serves as cofactor.

The enzyme catalyses (7,8-dihydropterin-6-yl)methyl diphosphate + 4-aminobenzoate = 7,8-dihydropteroate + diphosphate. It participates in cofactor biosynthesis; tetrahydrofolate biosynthesis; 7,8-dihydrofolate from 2-amino-4-hydroxy-6-hydroxymethyl-7,8-dihydropteridine diphosphate and 4-aminobenzoate: step 1/2. Functionally, catalyzes the condensation of para-aminobenzoate (pABA) with 6-hydroxymethyl-7,8-dihydropterin diphosphate (DHPt-PP) to form 7,8-dihydropteroate (H2Pte), the immediate precursor of folate derivatives. The sequence is that of Dihydropteroate synthase (folP) from Staphylococcus aureus (strain MSSA476).